Here is a 392-residue protein sequence, read N- to C-terminus: Chorismate synthase (392 aa).

Residues Arg-40 and Arg-46 each coordinate NADP(+). Residues 135-137, 256-257, Gly-300, 315-319, and Arg-341 contribute to the FMN site; these read RAS, QA, and KPIAT.

Belongs to the chorismate synthase family. Homotetramer. FMNH2 is required as a cofactor.

The enzyme catalyses 5-O-(1-carboxyvinyl)-3-phosphoshikimate = chorismate + phosphate. It functions in the pathway metabolic intermediate biosynthesis; chorismate biosynthesis; chorismate from D-erythrose 4-phosphate and phosphoenolpyruvate: step 7/7. Functionally, catalyzes the anti-1,4-elimination of the C-3 phosphate and the C-6 proR hydrogen from 5-enolpyruvylshikimate-3-phosphate (EPSP) to yield chorismate, which is the branch point compound that serves as the starting substrate for the three terminal pathways of aromatic amino acid biosynthesis. This reaction introduces a second double bond into the aromatic ring system. This Nocardioides sp. (strain ATCC BAA-499 / JS614) protein is Chorismate synthase.